We begin with the raw amino-acid sequence, 192 residues long: Large ribosomal subunit protein bL25 (192 aa).

Belongs to the bacterial ribosomal protein bL25 family. CTC subfamily. Part of the 50S ribosomal subunit; part of the 5S rRNA/L5/L18/L25 subcomplex. Contacts the 5S rRNA. Binds to the 5S rRNA independently of L5 and L18.

This is one of the proteins that binds to the 5S RNA in the ribosome where it forms part of the central protuberance. The polypeptide is Large ribosomal subunit protein bL25 (Solidesulfovibrio magneticus (strain ATCC 700980 / DSM 13731 / RS-1) (Desulfovibrio magneticus)).